Here is a 603-residue protein sequence, read N- to C-terminus: MALRTGSPALVVLLAFWVALGPCYLQGTDPGASADAEGPQCPVTCTCSYDDYTDELSVFCSSRNLTQLPDGIPVSTRALWLDGNNLSSIPSAAFQNLSSLDFLNLQGSWLRSLEPQALLGLQNLYHLHLERNLLRSLAAGLFRHTPSLASLSLGNNLLGRLEEGLFRGLSHLWDLNLGWNSLVVLPDTVFQGLGNLHELVLAGNKLTYLQPALLCGLGELRELDLSRNALRSVKANVFIHLPRLQKLYLDRNLITAVAPRAFLGMKALRWLDLSHNRVAGLLEDTFPGLLGLHVLRLAHNAITSLRPRTFKDLHFLEELQLGHNRIRQLGEKTFEGLGQLEVLTLNDNQIHEVKVGAFFGLFNVAVMNLSGNCLRSLPEHVFQGLGRLHSLHLEHSCLGRIRLHTFAGLSGLRRLFLRDNSISSIEEQSLAGLSELLELDLTANQLTHLPRQLFQGLGQLEYLLLSNNQLTMLSEDVLGPLQRAFWLDLSHNRLETPAEGLFSSLGRLRYLNLRNNSLQTFVPQPGLERLWLDANPWDCSCPLKALRDFALQNPGVVPRFVQTVCEGDDCQPVYTYNNITCAGPANVSGLDLRDISETLFVHC.

A signal peptide spans 1 to 23 (MALRTGSPALVVLLAFWVALGPC). In terms of domain architecture, LRRNT spans 32–74 (ASADAEGPQCPVTCTCSYDDYTDELSVFCSSRNLTQLPDGIPV). Disulfide bonds link Cys41/Cys47 and Cys45/Cys60. Residues Asn64, Asn85, and Asn96 are each glycosylated (N-linked (GlcNAc...) asparagine). LRR repeat units follow at residues 75 to 96 (STRA…AFQN), 99 to 120 (SLDF…ALLG), 123 to 144 (NLYH…LFRH), 147 to 168 (SLAS…LFRG), 171 to 192 (HLWD…VFQG), 195 to 216 (NLHE…LLCG), 219 to 240 (ELRE…VFIH), 243 to 264 (RLQK…AFLG), 267 to 288 (ALRW…TFPG), 291 to 312 (GLHV…TFKD), 315 to 336 (FLEE…TFEG), 339 to 360 (QLEV…AFFG), 363 to 384 (NVAV…VFQG), 387 to 408 (RLHS…TFAG), 411 to 432 (GLRR…SLAG), 435 to 456 (ELLE…LFQG), 459 to 480 (QLEY…VLGP), 483 to 504 (RAFW…LFSS), and 507 to 528 (RLRY…PGLE). A glycan (N-linked (GlcNAc...) asparagine) is linked at Asn368. Asn515 carries N-linked (GlcNAc...) asparagine glycosylation. Positions 535-603 (NPWDCSCPLK…DISETLFVHC (69 aa)) constitute an LRRCT domain. 3 cysteine pairs are disulfide-bonded: Cys539/Cys581, Cys541/Cys603, and Cys565/Cys570. N-linked (GlcNAc...) asparagine glycans are attached at residues Asn578 and Asn586.

In terms of assembly, forms a ternary complex with IGF1 and IGFBP3.

Its subcellular location is the secreted. The protein resides in the extracellular space. In terms of biological role, may have an important role in regulating the access of circulating IGFs to the tissues. This chain is Insulin-like growth factor-binding protein complex acid labile subunit (Igfals), found in Mus musculus (Mouse).